Here is a 541-residue protein sequence, read N- to C-terminus: Membrane protein insertase YidC (541 aa).

A helical membrane pass occupies residues 6–26 (SLLVLALIFISFLVYQQWQLD). Residues 34 to 56 (EQTTSITATSDVPASSPSNSQAI) form a disordered region. A run of 4 helical transmembrane segments spans residues 337–357 (FWLL…IICV), 416–436 (LGGC…YWTF), 454–474 (LSAQ…MFLL), and 495–515 (PLIF…YWLV).

This sequence belongs to the OXA1/ALB3/YidC family. Type 1 subfamily. As to quaternary structure, interacts with the Sec translocase complex via SecD. Specifically interacts with transmembrane segments of nascent integral membrane proteins during membrane integration.

It is found in the cell inner membrane. Required for the insertion and/or proper folding and/or complex formation of integral membrane proteins into the membrane. Involved in integration of membrane proteins that insert both dependently and independently of the Sec translocase complex, as well as at least some lipoproteins. Aids folding of multispanning membrane proteins. The protein is Membrane protein insertase YidC of Haemophilus influenzae (strain PittEE).